Consider the following 525-residue polypeptide: Bestrophin homolog 15 (525 aa).

4 helical membrane passes run 36 to 56 (LFMFIIAFITVSSVYRSNLII), 71 to 91 (FDQNMDFIPLTFMLGFFVTII), 237 to 257 (LAYPQVVFLAVRSYFFMALIA), and 273 to 293 (ILYPTVPFVMSILQFIFVVGW).

It belongs to the anion channel-forming bestrophin (TC 1.A.46) family. Calcium-sensitive chloride channel subfamily. Forms oligomers.

The protein localises to the cell membrane. Forms chloride channels. The sequence is that of Bestrophin homolog 15 (best-15) from Caenorhabditis elegans.